A 276-amino-acid chain; its full sequence is Aspartate dehydrogenase domain-containing protein (276 aa).

This sequence belongs to the L-aspartate dehydrogenase family.

The polypeptide is Aspartate dehydrogenase domain-containing protein (aspdh) (Danio rerio (Zebrafish)).